Consider the following 578-residue polypeptide: SUMOylated effector protein AmpA (578 aa).

The segment at 144–169 (PQTVDPSVVESATGSGVDTQEEQEID) is disordered. 3 repeat units span residues 180-272 (TEEQ…SVEA), 304-425 (KEET…VSVE), and 428-557 (TEEP…MQQE). Residues 180 to 557 (TEEQEVILEE…VEADAGMQQE (378 aa)) form a 3 X approximate tandem repeats region. The interval 516–578 (VSVEADAGMQ…DPDDEDVLSY (63 aa)) is disordered.

Polysumoylated during infection on at least two lysine residues, in the N- and C-terminal section. SUMO2/3 modification of AmpA throughout the infection cycle is likely critical for bacterial intracellular survival, while terminal SUMO1 conjugation of AmpA may promote a late-stage infection cycle event. Only a small portion of the available AmpA pool is actually SUMOylated at any given time.

The protein localises to the secreted. It is found in the host membrane. It localises to the host cytoplasm. The protein resides in the host cytosol. In terms of biological role, secreted effector that hijacks host cell SUMOylation during A.phagocytophilum infection and is important for the pathogen's intracellular survival. The polypeptide is SUMOylated effector protein AmpA (Anaplasma phagocytophilum (strain HZ)).